The primary structure comprises 1342 residues: DNA-directed RNA polymerase subunit beta (1342 aa).

This sequence belongs to the RNA polymerase beta chain family. In terms of assembly, the RNAP catalytic core consists of 2 alpha, 1 beta, 1 beta' and 1 omega subunit. When a sigma factor is associated with the core the holoenzyme is formed, which can initiate transcription.

The catalysed reaction is RNA(n) + a ribonucleoside 5'-triphosphate = RNA(n+1) + diphosphate. Functionally, DNA-dependent RNA polymerase catalyzes the transcription of DNA into RNA using the four ribonucleoside triphosphates as substrates. The chain is DNA-directed RNA polymerase subunit beta from Pectobacterium carotovorum subsp. carotovorum (strain PC1).